The chain runs to 506 residues: Sugar transport protein 5 (506 aa).

At 1 to 19 (MAGGGLALDVSSAGNIDAK) the chain is on the cytoplasmic side. 12 helical membrane passes run 20–40 (ITAA…IFGY), 81–101 (LLTA…LVAS), 117–137 (GFTF…AMLI), 141–161 (ILLG…LSEV), 168–188 (GAFN…ANLI), 201–221 (ISLG…LFIS), 287–307 (LVVA…VNAF), 325–345 (IATF…TMVI), 352–372 (FLFI…AVLL), 390–410 (VTVV…WGPL), 430–450 (LSVA…LATL), and 456–476 (GAFL…IMFL). Topologically, residues 477 to 506 (PETKGIPVDSMYQVWEKHWYWQRFTKPTST) are cytoplasmic.

Belongs to the major facilitator superfamily. Sugar transporter (TC 2.A.1.1) family.

It is found in the membrane. In terms of biological role, mediates an active uptake of hexoses, probably by sugar/hydrogen symport. The chain is Sugar transport protein 5 (STP5) from Arabidopsis thaliana (Mouse-ear cress).